The following is a 174-amino-acid chain: Small ribosomal subunit protein uS4 (174 aa).

Residues 105-169 (RRLQTVAYRK…SPLADDLHPE (65 aa)) enclose the S4 RNA-binding domain.

The protein belongs to the universal ribosomal protein uS4 family. In terms of assembly, part of the 30S ribosomal subunit. Contacts protein S5. The interaction surface between S4 and S5 is involved in control of translational fidelity.

One of the primary rRNA binding proteins, it binds directly to 16S rRNA where it nucleates assembly of the body of the 30S subunit. In terms of biological role, with S5 and S12 plays an important role in translational accuracy. This is Small ribosomal subunit protein uS4 from Natronomonas pharaonis (strain ATCC 35678 / DSM 2160 / CIP 103997 / JCM 8858 / NBRC 14720 / NCIMB 2260 / Gabara) (Halobacterium pharaonis).